A 409-amino-acid polypeptide reads, in one-letter code: FAD-dependent monooxygenase phnB (409 aa).

Glutamate 35, alanine 50, arginine 110, and aspartate 311 together coordinate FAD.

Belongs to the paxM FAD-dependent monooxygenase family. Requires FAD as cofactor.

It catalyses the reaction 3,6,7,9-tetrahydroxy-3-methyl-2,3-dihydro-1H-naphtho[2,1-b]pyran-1-one + NADPH + O2 + H(+) = 2,3,4,7,9-pentahydroxy-6-methyl-1H-phenalen-1-one + NADP(+) + 2 H2O. Its pathway is secondary metabolite biosynthesis. Its function is as follows. FAD-dependent monooxygenase; part of the gene cluster that mediates the biosynthesis of phenalenones such as herqueinone, compounds that have been reported to treat tumors, bacterial infections and/or mycoses, and rheumatic diseases. The non-reducing polyketide synthase phnA synthesizes the heptaketide backbone and cyclizes it into the angular, hemiketal-containing naphtho-gamma-pyrone prephenalenone. The product template (PT) domain of phnA catalyzes only the C4-C9 aldol condensation, which is unprecedented among known PT domains. The transformation of prephenalenone to phenalenones requires an FAD-dependent monooxygenase phnB, which catalyzes the C2 aromatic hydroxylation of prephenalenone and ring opening of the gamma-pyrone ring simultaneously. Subsequent intramolecular deprotonation of C3 phenolic oxygen accelerates phenalenone ring closure to yield the tricyclic phenalenone core with a C2 hydroxylation. The prenyltransferase phnF further catalyzes reverse C-prenylation of phenalenone by direct electrophilic substitution at C6, or possibly via first a forward O-prenylation of a neighboring phenol in phenalenone, followed by a Claisen rearrangement. The hydroalkoxylation enzyme phnH catalyzes the 5-exo-trig cyclization via acid catalysis after the spontaneous deprotonation of 7-OH, which leads to the formation of the dihydrobenzofuran atrovenetin. Atrovenetin is further converted to deoxyherqueinone by the O-methyltransferase phnC which can methylate C2-OH to stabilize the northern portion of the phenalenone core. Finally, the oxidoreductase phnG converts deoxyherqueinone to herqueinone via C6 hydroxylation. In Penicillium herquei, this protein is FAD-dependent monooxygenase phnB.